The sequence spans 808 residues: Transducin beta-like protein 3 (808 aa).

Ala-2 is subject to N-acetylalanine. WD repeat units follow at residues 64 to 105, 107 to 146, 149 to 190, 193 to 232, 245 to 284, 290 to 329, 332 to 372, 374 to 413, 419 to 459, 477 to 516, 519 to 560, 562 to 602, and 604 to 642; these read EDQE…RLWK, IHTA…GTHH, GSPG…CLAV, AHYS…ATRT, LPEE…CVYT, GPGQ…LQKQ, GYSE…CQIL, GHTD…QVMC, GHTH…LSKN, CHDK…LLGV, GHRR…KTFE, HDAS…RTLD, and HEDK…EQAE. Ser-257 carries the phosphoserine modification. Residue Lys-407 forms a Glycyl lysine isopeptide (Lys-Gly) (interchain with G-Cter in SUMO2) linkage.

Part of the small subunit (SSU) processome, composed of more than 70 proteins and the RNA chaperone small nucleolar RNA (snoRNA) U3.

It localises to the nucleus. The protein localises to the nucleolus. In terms of biological role, part of the small subunit (SSU) processome, first precursor of the small eukaryotic ribosomal subunit. During the assembly of the SSU processome in the nucleolus, many ribosome biogenesis factors, an RNA chaperone and ribosomal proteins associate with the nascent pre-rRNA and work in concert to generate RNA folding, modifications, rearrangements and cleavage as well as targeted degradation of pre-ribosomal RNA by the RNA exosome. The sequence is that of Transducin beta-like protein 3 from Homo sapiens (Human).